The chain runs to 209 residues: ATP-dependent Clp protease proteolytic subunit 2 (209 aa).

The active-site Nucleophile is Ser107. The active site involves His132.

This sequence belongs to the peptidase S14 family. In terms of assembly, fourteen ClpP subunits assemble into 2 heptameric rings which stack back to back to give a disk-like structure with a central cavity, resembling the structure of eukaryotic proteasomes.

The protein localises to the cytoplasm. It catalyses the reaction Hydrolysis of proteins to small peptides in the presence of ATP and magnesium. alpha-casein is the usual test substrate. In the absence of ATP, only oligopeptides shorter than five residues are hydrolyzed (such as succinyl-Leu-Tyr-|-NHMec, and Leu-Tyr-Leu-|-Tyr-Trp, in which cleavage of the -Tyr-|-Leu- and -Tyr-|-Trp bonds also occurs).. Its function is as follows. Cleaves peptides in various proteins in a process that requires ATP hydrolysis. Has a chymotrypsin-like activity. Plays a major role in the degradation of misfolded proteins. In Corynebacterium jeikeium (strain K411), this protein is ATP-dependent Clp protease proteolytic subunit 2.